The following is a 579-amino-acid chain: Protein inscuteable homolog (579 aa).

An important for interaction with GPSM2 region spans residues 74–89 (SVQRWMEDLKLMTECE). A PDZ-binding motif is present at residues 576–579 (ESFV).

In terms of assembly, interacts with ALS2CR19/PAR3B and GPSM1/AGS3. Interacts with F2RL2/PAR3. Interacts with GPSM2/LGN (via TPR repeat region). As to expression, expressed in brain, kidney, liver, testis and skin.

It localises to the cytoplasm. Its subcellular location is the cell cortex. Functionally, may function as an adapter linking the Par3 complex to the GPSM1/GPSM2 complex. Involved in spindle orientation during mitosis. May regulate cell proliferation and differentiation in the developing nervous system. May play a role in the asymmetric division of fibroblasts and participate in the process of stratification of the squamous epithelium. This Mus musculus (Mouse) protein is Protein inscuteable homolog (Insc).